The following is a 462-amino-acid chain: PTS system mannitol-specific cryptic EIICB component (462 aa).

The Cytoplasmic segment spans residues 1-24; the sequence is MENKSARAKVQAFGGFLTAMVIPN. In terms of domain architecture, PTS EIIC type-2 spans 13-344; the sequence is FGGFLTAMVI…LKMEKTVETE (332 aa). Residues 25-46 form a helical membrane-spanning segment; it reads IGAFIAWGFITALFIPTGWLPN. Topologically, residues 47-50 are periplasmic; the sequence is EHFA. The chain crosses the membrane as a helical span at residues 51-71; that stretch reads KIVGPMITYLLPVMIGSTGGH. Topologically, residues 72-134 are cytoplasmic; the sequence is LVGGKRGAVM…AGFEMVINNF (63 aa). The chain crosses the membrane as a helical span at residues 135 to 156; that stretch reads SLGIAGMLLCLLGFEVIGPAVL. Residues 157-165 lie on the Periplasmic side of the membrane; sequence IANTFVKEC. A helical membrane pass occupies residues 166–186; sequence IEALVHAGYLPLLSVINEPAK. At 187 to 273 the chain is on the cytoplasmic side; the sequence is VLFLNNAIDQ…VLMKPLTIIA (87 aa). Residues 274–293 traverse the membrane as a helical segment; the sequence is MIAGGMSGTWMFNLLDGGLV. The Periplasmic portion of the chain corresponds to 294-313; that stretch reads AGPSPGSIFAYLALTPKGSF. The helical transmembrane segment at 314-335 threads the bilayer; the sequence is LATIAGVTVGTLVSFAITSLIL. Over 336–462 the chain is Cytoplasmic; sequence KMEKTVETES…FNQLTAEHKH (127 aa). One can recognise a PTS EIIB type-2 domain in the interval 371–461; that stretch reads KRIAFVCDAG…LFNQLTAEHK (91 aa). Cys377 functions as the Phosphocysteine intermediate; for EIIB activity in the catalytic mechanism. A Phosphocysteine; by EIIA modification is found at Cys377.

It localises to the cell inner membrane. It carries out the reaction D-mannitol(out) + N(pros)-phospho-L-histidyl-[protein] = D-mannitol 1-phosphate(in) + L-histidyl-[protein]. The phosphoenolpyruvate-dependent sugar phosphotransferase system (sugar PTS), a major carbohydrate active transport system, catalyzes the phosphorylation of incoming sugar substrates concomitantly with their translocation across the cell membrane. The enzyme II CmtAB PTS system is involved in D-mannitol transport. This chain is PTS system mannitol-specific cryptic EIICB component (cmtA), found in Escherichia coli O157:H7.